The sequence spans 296 residues: 4-hydroxy-tetrahydrodipicolinate synthase (296 aa).

Position 46 (Thr46) interacts with pyruvate. The active-site Proton donor/acceptor is the Tyr134. Residue Lys162 is the Schiff-base intermediate with substrate of the active site. Residue Ile204 participates in pyruvate binding.

This sequence belongs to the DapA family. As to quaternary structure, homotetramer; dimer of dimers.

It localises to the cytoplasm. The enzyme catalyses L-aspartate 4-semialdehyde + pyruvate = (2S,4S)-4-hydroxy-2,3,4,5-tetrahydrodipicolinate + H2O + H(+). Its pathway is amino-acid biosynthesis; L-lysine biosynthesis via DAP pathway; (S)-tetrahydrodipicolinate from L-aspartate: step 3/4. In terms of biological role, catalyzes the condensation of (S)-aspartate-beta-semialdehyde [(S)-ASA] and pyruvate to 4-hydroxy-tetrahydrodipicolinate (HTPA). In Clostridium novyi (strain NT), this protein is 4-hydroxy-tetrahydrodipicolinate synthase.